The chain runs to 229 residues: MSASLAGLERKLGYTFKNQDQMLLALTHRSYAGRNNERLEFLGDAILNFVAGEALFERFPQAREGQLSRLRARLVKGETLARLARGFDLGDYLRLGSGELKSGGFRRESILADALEALIGAIYLDADMDTARERILAWLADEFEGLTLVDTNKDPKTRLQEFLQSRSCELPRYEVVDIQGEPHCRTFFVECEVVLLNNKSRGQGVSRRIAEQVAAASALIALGVENGND.

One can recognise an RNase III domain in the interval 5 to 127; sequence LAGLERKLGY…LIGAIYLDAD (123 aa). Glu40 is a binding site for Mg(2+). The active site involves Asp44. Positions 113 and 116 each coordinate Mg(2+). Residue Glu116 is part of the active site. The region spanning 154–224 is the DRBM domain; that stretch reads DPKTRLQEFL…AASALIALGV (71 aa).

Belongs to the ribonuclease III family. In terms of assembly, homodimer. It depends on Mg(2+) as a cofactor.

The protein resides in the cytoplasm. The catalysed reaction is Endonucleolytic cleavage to 5'-phosphomonoester.. Digests double-stranded RNA. Involved in the processing of primary rRNA transcript to yield the immediate precursors to the large and small rRNAs (23S and 16S). Processes some mRNAs, and tRNAs when they are encoded in the rRNA operon. Processes pre-crRNA and tracrRNA of type II CRISPR loci if present in the organism. The protein is Ribonuclease 3 of Pseudomonas putida (strain ATCC 700007 / DSM 6899 / JCM 31910 / BCRC 17059 / LMG 24140 / F1).